A 1405-amino-acid polypeptide reads, in one-letter code: DNA-directed RNA polymerase subunit beta' (1405 aa).

Residues cysteine 70, cysteine 72, cysteine 85, and cysteine 88 each coordinate Zn(2+). 3 residues coordinate Mg(2+): aspartate 460, aspartate 462, and aspartate 464. Cysteine 814, cysteine 888, cysteine 895, and cysteine 898 together coordinate Zn(2+).

This sequence belongs to the RNA polymerase beta' chain family. As to quaternary structure, the RNAP catalytic core consists of 2 alpha, 1 beta, 1 beta' and 1 omega subunit. When a sigma factor is associated with the core the holoenzyme is formed, which can initiate transcription. Requires Mg(2+) as cofactor. Zn(2+) serves as cofactor.

The enzyme catalyses RNA(n) + a ribonucleoside 5'-triphosphate = RNA(n+1) + diphosphate. DNA-dependent RNA polymerase catalyzes the transcription of DNA into RNA using the four ribonucleoside triphosphates as substrates. This Wigglesworthia glossinidia brevipalpis protein is DNA-directed RNA polymerase subunit beta'.